We begin with the raw amino-acid sequence, 240 residues long: Tetrahydromethanopterin S-methyltransferase subunit A (240 aa).

Over 1–218 the chain is Cytoplasmic; it reads MVDKKEPASG…KFHSGVHAGK (218 aa). H85 provides a ligand contact to 5-hydroxybenzimidazolylcob(I)amide. Residues 219–239 traverse the membrane as a helical segment; sequence IEGAMIGLTVTISLLGLLLLG. R240 is a topological domain (extracellular).

This sequence belongs to the MtrA family. In terms of assembly, the complex is composed of 8 subunits; MtrA, MtrB, MtrC, MtrD, MtrE, MtrF, MtrG and MtrH. It depends on 5-hydroxybenzimidazolylcob(I)amide as a cofactor.

It is found in the cell membrane. The enzyme catalyses 5-methyl-5,6,7,8-tetrahydromethanopterin + coenzyme M + 2 Na(+)(in) = 5,6,7,8-tetrahydromethanopterin + methyl-coenzyme M + 2 Na(+)(out). It participates in one-carbon metabolism; methanogenesis from CO(2); methyl-coenzyme M from 5,10-methylene-5,6,7,8-tetrahydromethanopterin: step 2/2. Functionally, part of a complex that catalyzes the formation of methyl-coenzyme M and tetrahydromethanopterin from coenzyme M and methyl-tetrahydromethanopterin. This is an energy-conserving, sodium-ion translocating step. The polypeptide is Tetrahydromethanopterin S-methyltransferase subunit A (Methanosarcina acetivorans (strain ATCC 35395 / DSM 2834 / JCM 12185 / C2A)).